We begin with the raw amino-acid sequence, 62 residues long: Large ribosomal subunit protein bL32 (62 aa).

A compositionally biased stretch (basic residues) spans 1 to 18 (MGVPKKRTSKMRRDRRRA). The interval 1 to 22 (MGVPKKRTSKMRRDRRRAANNN) is disordered.

This sequence belongs to the bacterial ribosomal protein bL32 family.

The protein is Large ribosomal subunit protein bL32 of Myxococcus xanthus (strain DK1622).